Reading from the N-terminus, the 424-residue chain is Serine hydroxymethyltransferase (424 aa).

Residues leucine 126 and 130–132 each bind (6S)-5,6,7,8-tetrahydrofolate; that span reads GHL. Residue lysine 235 is modified to N6-(pyridoxal phosphate)lysine. 359 to 361 is a binding site for (6S)-5,6,7,8-tetrahydrofolate; the sequence is SPF.

It belongs to the SHMT family. Homodimer. Requires pyridoxal 5'-phosphate as cofactor.

The protein resides in the cytoplasm. It catalyses the reaction (6R)-5,10-methylene-5,6,7,8-tetrahydrofolate + glycine + H2O = (6S)-5,6,7,8-tetrahydrofolate + L-serine. It functions in the pathway one-carbon metabolism; tetrahydrofolate interconversion. The protein operates within amino-acid biosynthesis; glycine biosynthesis; glycine from L-serine: step 1/1. Its function is as follows. Catalyzes the reversible interconversion of serine and glycine with tetrahydrofolate (THF) serving as the one-carbon carrier. This reaction serves as the major source of one-carbon groups required for the biosynthesis of purines, thymidylate, methionine, and other important biomolecules. Also exhibits THF-independent aldolase activity toward beta-hydroxyamino acids, producing glycine and aldehydes, via a retro-aldol mechanism. The polypeptide is Serine hydroxymethyltransferase (Prochlorococcus marinus (strain MIT 9303)).